Consider the following 393-residue polypeptide: Pyrin and HIN domain-containing protein 1-like (393 aa).

The region spanning 1-87 is the Pyrin domain; that stretch reads MVNEYKRIVL…ANKLKNEKAK (87 aa). The disordered stretch occupies residues 82 to 188; that stretch reads KNEKAKAKRK…TPTRSSSRIL (107 aa). Positions 87 to 102 are enriched in basic residues; it reads KAKRKGKGKRKTAAKR. 2 stretches are compositionally biased toward polar residues: residues 108 to 118 and 126 to 151; these read PSTSQPMSTTN and GRST…AIQI. A compositionally biased stretch (low complexity) spans 152–169; it reads SPTIASSSGQTSSRSSET. Residues 170 to 186 show a composition bias toward polar residues; sequence LQSIIQSPETPTRSSSR. One can recognise an HIN-200 domain in the interval 219–393; the sequence is NVPKEPSEEN…NPGDKLRLML (175 aa).

It belongs to the HIN-200 family.

It localises to the nucleus. The chain is Pyrin and HIN domain-containing protein 1-like from Mus musculus (Mouse).